The sequence spans 132 residues: Small ribosomal subunit protein uS8 (132 aa).

This sequence belongs to the universal ribosomal protein uS8 family. Part of the 30S ribosomal subunit. Contacts proteins S5 and S12.

In terms of biological role, one of the primary rRNA binding proteins, it binds directly to 16S rRNA central domain where it helps coordinate assembly of the platform of the 30S subunit. This Saccharopolyspora erythraea (strain ATCC 11635 / DSM 40517 / JCM 4748 / NBRC 13426 / NCIMB 8594 / NRRL 2338) protein is Small ribosomal subunit protein uS8.